Consider the following 212-residue polypeptide: UDP-N-acetylglucosamine transferase subunit ALG13 (212 aa).

Belongs to the glycosyltransferase 28 family. In terms of assembly, heterodimer with ALG14 to form a functional enzyme.

It localises to the endoplasmic reticulum. It catalyses the reaction an N-acetyl-alpha-D-glucosaminyl-diphospho-di-trans,poly-cis-dolichol + UDP-N-acetyl-alpha-D-glucosamine = an N,N'-diacetylchitobiosyl-diphospho-di-trans,poly-cis-dolichol + UDP + H(+). In terms of biological role, involved in protein N-glycosylation. Essential for the second step of the dolichol-linked oligosaccharide pathway. This is UDP-N-acetylglucosamine transferase subunit ALG13 (ALG13) from Debaryomyces hansenii (strain ATCC 36239 / CBS 767 / BCRC 21394 / JCM 1990 / NBRC 0083 / IGC 2968) (Yeast).